An 84-amino-acid polypeptide reads, in one-letter code: Kidney-associated antigen 1 (84 aa).

The interval 31–84 is disordered; sequence PGAAAAHLPRWPPPQLAASRREAPPLSQRPHRTQGAGSPPETNEKLTNPQVKEK. Residues 75-84 are compositionally biased toward polar residues; that stretch reads KLTNPQVKEK.

In terms of tissue distribution, expressed in testis and kidney, and, at lower levels, in urinary bladder and liver. Expressed by a high proportion of tumors of various histologic origin, including melanomas, sarcomas and colorectal carcinomas.

The sequence is that of Kidney-associated antigen 1 (KAAG1) from Homo sapiens (Human).